A 188-amino-acid chain; its full sequence is UPF0301 protein XCV3063 (188 aa).

It belongs to the UPF0301 (AlgH) family.

In Xanthomonas euvesicatoria pv. vesicatoria (strain 85-10) (Xanthomonas campestris pv. vesicatoria), this protein is UPF0301 protein XCV3063.